Here is a 1400-residue protein sequence, read N- to C-terminus: MNQEVMNLFNQQAQPQSFDQIKISISSPEKILSWSYGEIKKPETINYRTFKPERDGLFCARIFGPIKDYECLCGKYKRMKYKGVICEKCGVEVTLARVRRDRMGHIELAAPVAHIWFLKSLPSRIGLLLDMALKDLERILYFESYVVIEPGLTPLKERQLLSEEEYLRAQEEYGEDSFTAMIGAEAIRRILQDLNLEKIAADLRQEIATTTSDLKPKKLLKRLKIIEAFQMSGNRPEWMILTVVPVIPPDLRPLVPLDGGRFATSDLNDLYRRVINRNNRLKRLIELRAPDIIIRNEKRMLQEAVDALFDNGRRGRVITGANKRPLKSLADMLKGKQGRFRQNLLGKRVDYSGRSVIVVGPELKLHQCGLPKKMALELFKPFIYARLDAKGFSATVKQAKKLVEKEKPEVWDILDEVIREHPVMLNRAPTLHRLGIQAFEPKLIEGKAIQLHPLVCAAFNADFDGDQMAVHVPLSLEAQLEARVLMMSTNNILHPANGAPIIVPSQDIVLGLYYLSIVADGAPGEYKPNNPQNPMQGVYGDFGELEHALASRAVTLHSRIKWRWKGLGPDGEEISRTYDTTPGRVILSSVLPRHPKVPFDVVNKLMTKKEISAMIDIVYRHCGQKESVIFCDRIMGLGFSHAFKAGISFGKDDMVVPENKWSIVDETRALVKDYEQQYQDGLITQGEKYNKVVDAWAKCSDRLASEMMNRISSVQKDENGADKQVNSIYMMSHSGARGSPAQMKQLAAMRGLMAKPSGEIIESPIISNFKEGLDVLEYFNSTHGARKGLADTALKTANSGYLTRRLVDVAQDAVIREVDCGTENGIRMRAIIDAGQVVATLATRILGRATAEDLVAPDGTIIVPKGQMIEERHLEAISKAGIQEVKIRSVLVCATKNGVCATCYGRDLARGTPVNQGEAVGVIAAQSIGEPGTQLTMRTFHIGGAAQIADSSFIESSFEGTVRIRNRGLARNSDGDLVAIGRNVAVVIVGPDGTERAVHRLQYGARVRVDEGDQIKRGQRIAEWDPYTRPILTEVDGIVAYEDLIDGQSITETTDESTGIAKRVVIDWRGSARTADLRPAIAIHDQTGKVQKLPRGSDARALLPVDAIIGVDPGARVKAGDILARVSTESAKTRDITGGLPRVAELFEARRPKDAAIIAEKSGTISFGRDYKNKRRLTLTPHDGSEPVEYLIPKGKHIHLQDGDVVEIGDFIVDGNPAPHDILAIKGVEELAAYLVNEIQEVYRLQGVSINDKHIEVIVRQMLQKVEITDSGDSEILTGDQIDRTELQEINEQLIAEGKKPVQGVPVLLGITKASLQTRSFISAASFQETTRVLTEAAVNGKVDTLEGLKENVIVGSLIPAGTGAMIADIKSIARRRDDLIMAQKAAESGAALPELPAAE.

Zn(2+) contacts are provided by Cys-71, Cys-73, Cys-86, and Cys-89. The Mg(2+) site is built by Asp-462, Asp-464, and Asp-466. The Zn(2+) site is built by Cys-820, Cys-893, Cys-900, and Cys-903.

Belongs to the RNA polymerase beta' chain family. As to quaternary structure, the RNAP catalytic core consists of 2 alpha, 1 beta, 1 beta' and 1 omega subunit. When a sigma factor is associated with the core the holoenzyme is formed, which can initiate transcription. The cofactor is Mg(2+). Requires Zn(2+) as cofactor.

The catalysed reaction is RNA(n) + a ribonucleoside 5'-triphosphate = RNA(n+1) + diphosphate. Its function is as follows. DNA-dependent RNA polymerase catalyzes the transcription of DNA into RNA using the four ribonucleoside triphosphates as substrates. This Methylobacterium nodulans (strain LMG 21967 / CNCM I-2342 / ORS 2060) protein is DNA-directed RNA polymerase subunit beta'.